The primary structure comprises 428 residues: MLCRSFNISQLAIPFVSVLISFLAYTSQLFFYYFEEAPLRSEEFWRLNIFAVCIWVCYYRACTVDPGRIPKDWTPPNLKQLEKDCAGGRQRWCRRCEAFKPPRAHHCKTCQRCIPKMDHHCPWTSNCVSHFTYPHFMRFLFYAVVGMGYLETLLFERASIVWASRHLPSYLGPGLGQLVHLFILLVVNSLTWLALFILLLRSIWSLALNTTTIESWEIERHETLLRRARHFGGYLSGPGGIQIRIKKQEFPYDIGIWSNIRAGMGGSANVLSWFWPFAATPDRSTGLEFEVNGFEDPNLSWPPPDPDRIPLPAKREDMSAAIAAADASYHRALQARNIQRSNDASHSGGHPIQRRKRFHDRFNENKAKERLSESESDFSDDEEVQDGEEGWKNSEGDRLRDFGVDEEAEFYDEEDIPLGILMQRRRQQ.

Over 1 to 10 the chain is Cytoplasmic; it reads MLCRSFNISQ. Residues 11–31 form a helical membrane-spanning segment; the sequence is LAIPFVSVLISFLAYTSQLFF. Residues 32–43 are Lumenal-facing; it reads YYFEEAPLRSEE. A helical membrane pass occupies residues 44 to 61; that stretch reads FWRLNIFAVCIWVCYYRA. The Cytoplasmic portion of the chain corresponds to 62–134; that stretch reads CTVDPGRIPK…SNCVSHFTYP (73 aa). A DHHC domain is found at 91–141; sequence RWCRRCEAFKPPRAHHCKTCQRCIPKMDHHCPWTSNCVSHFTYPHFMRFLF. Cysteine 121 acts as the S-palmitoyl cysteine intermediate in catalysis. The chain crosses the membrane as a helical span at residues 135–155; the sequence is HFMRFLFYAVVGMGYLETLLF. Residues 156–177 are Lumenal-facing; that stretch reads ERASIVWASRHLPSYLGPGLGQ. The chain crosses the membrane as a helical span at residues 178-198; that stretch reads LVHLFILLVVNSLTWLALFIL. Topologically, residues 199–428 are cytoplasmic; that stretch reads LLRSIWSLAL…GILMQRRRQQ (230 aa). The tract at residues 339-400 is disordered; it reads QRSNDASHSG…WKNSEGDRLR (62 aa). Over residues 360-373 the composition is skewed to basic and acidic residues; sequence DRFNENKAKERLSE. Over residues 374-388 the composition is skewed to acidic residues; it reads SESDFSDDEEVQDGE. Residues 389–400 show a composition bias toward basic and acidic residues; that stretch reads EGWKNSEGDRLR.

Belongs to the DHHC palmitoyltransferase family. PFA4 subfamily.

It is found in the endoplasmic reticulum membrane. It catalyses the reaction L-cysteinyl-[protein] + hexadecanoyl-CoA = S-hexadecanoyl-L-cysteinyl-[protein] + CoA. Mediates the reversible addition of palmitate to target proteins, thereby regulating their membrane association and biological function. In Aspergillus fumigatus (strain ATCC MYA-4609 / CBS 101355 / FGSC A1100 / Af293) (Neosartorya fumigata), this protein is Palmitoyltransferase pfa4.